A 52-amino-acid chain; its full sequence is Light-harvesting protein B-880 alpha chain (52 aa).

At 1-12 the chain is on the cytoplasmic side; that stretch reads MWKVWLLFDPRR. The chain crosses the membrane as a helical span at residues 13–33; the sequence is TLVALFTFLFVLALLIHFILL. His29 serves as a coordination point for a bacteriochlorophyll. The Periplasmic segment spans residues 34–52; it reads STDRFNWMQGAPTAPAQTS.

It belongs to the antenna complex alpha subunit family. The core complex is formed by different alpha and beta chains, binding bacteriochlorophyll molecules, and arranged most probably in tetrameric structures disposed around the reaction center. The non-pigmented gamma chains may constitute additional components.

It localises to the cell inner membrane. Its function is as follows. Antenna complexes are light-harvesting systems, which transfer the excitation energy to the reaction centers. The chain is Light-harvesting protein B-880 alpha chain from Afifella marina (Rhodobium marinum).